Here is a 478-residue protein sequence, read N- to C-terminus: Protein nucleotidyltransferase YdiU (478 aa).

The ATP site is built by Gly84, Gly86, Arg87, Lys107, Asp119, Gly120, Arg170, and Arg177. Asp246 serves as the catalytic Proton acceptor. The Mg(2+) site is built by Asn247 and Asp256. ATP is bound at residue Asp256.

Belongs to the SELO family. The cofactor is Mg(2+). Mn(2+) is required as a cofactor.

It carries out the reaction L-seryl-[protein] + ATP = 3-O-(5'-adenylyl)-L-seryl-[protein] + diphosphate. It catalyses the reaction L-threonyl-[protein] + ATP = 3-O-(5'-adenylyl)-L-threonyl-[protein] + diphosphate. The enzyme catalyses L-tyrosyl-[protein] + ATP = O-(5'-adenylyl)-L-tyrosyl-[protein] + diphosphate. The catalysed reaction is L-histidyl-[protein] + UTP = N(tele)-(5'-uridylyl)-L-histidyl-[protein] + diphosphate. It carries out the reaction L-seryl-[protein] + UTP = O-(5'-uridylyl)-L-seryl-[protein] + diphosphate. It catalyses the reaction L-tyrosyl-[protein] + UTP = O-(5'-uridylyl)-L-tyrosyl-[protein] + diphosphate. In terms of biological role, nucleotidyltransferase involved in the post-translational modification of proteins. It can catalyze the addition of adenosine monophosphate (AMP) or uridine monophosphate (UMP) to a protein, resulting in modifications known as AMPylation and UMPylation. This is Protein nucleotidyltransferase YdiU from Escherichia coli O139:H28 (strain E24377A / ETEC).